Here is a 937-residue protein sequence, read N- to C-terminus: Periplasmic nitrate reductase (937 aa).

The segment at residues methionine 1 to alanine 42 is a signal peptide (tat-type signal). Residues tryptophan 49 to aspartate 110 enclose the 4Fe-4S Mo/W bis-MGD-type domain. 4 residues coordinate [4Fe-4S] cluster: cysteine 56, cysteine 59, cysteine 63, and cysteine 96. Mo-bis(molybdopterin guanine dinucleotide) contacts are provided by residues lysine 98, glutamine 166, asparagine 191, cysteine 195, tryptophan 228–methionine 235, methionine 433, glutamine 437, asparagine 543, serine 568–glutamate 569, lysine 591, aspartate 618, and threonine 827–serine 836. Substrate is bound at residue tryptophan 903. 2 residues coordinate Mo-bis(molybdopterin guanine dinucleotide): asparagine 911 and lysine 928.

It belongs to the prokaryotic molybdopterin-containing oxidoreductase family. NasA/NapA/NarB subfamily. In terms of assembly, component of the periplasmic nitrate reductase NapAB complex composed of NapA and NapB. [4Fe-4S] cluster is required as a cofactor. Mo-bis(molybdopterin guanine dinucleotide) serves as cofactor. Post-translationally, predicted to be exported by the Tat system. The position of the signal peptide cleavage has not been experimentally proven.

Its subcellular location is the periplasm. The catalysed reaction is 2 Fe(II)-[cytochrome] + nitrate + 2 H(+) = 2 Fe(III)-[cytochrome] + nitrite + H2O. Catalytic subunit of the periplasmic nitrate reductase complex NapAB. Receives electrons from NapB and catalyzes the reduction of nitrate to nitrite. The chain is Periplasmic nitrate reductase from Helicobacter hepaticus (strain ATCC 51449 / 3B1).